Reading from the N-terminus, the 115-residue chain is Holo-[acyl-carrier-protein] synthase (115 aa).

Residues Asp-6 and Glu-51 each contribute to the Mg(2+) site.

The protein belongs to the P-Pant transferase superfamily. AcpS family. It depends on Mg(2+) as a cofactor.

The protein localises to the cytoplasm. It catalyses the reaction apo-[ACP] + CoA = holo-[ACP] + adenosine 3',5'-bisphosphate + H(+). Its function is as follows. Transfers the 4'-phosphopantetheine moiety from coenzyme A to a Ser of acyl-carrier-protein. This Campylobacter jejuni subsp. doylei (strain ATCC BAA-1458 / RM4099 / 269.97) protein is Holo-[acyl-carrier-protein] synthase.